The primary structure comprises 623 residues: MNNTLNQHYEEKVRPCIDLIDSLRSLGVEKDLALPAIAVIGDQSSGKSSVLEALSGVALPRGSGIVTRCPLELKMKRKREGEEWHGKISYQDHEEEIEDPSDVEKKIREAQDEMAGVGVGISDDLISLEIGSPDVPDLTLIDLPGIARVAVKGQPENIGEQIKRLIRKFIMKQETINLVVVPCNVDIATTEALQMAQEVDPEGERTLGILTKPDLVDKGTEETVVDIVHNEVIHLTKGYMIVKCRGQKEIMERVSLTEATEREKAFFKEHAHLSTLYDEGHATIPKLAEKLTLELVHHIEKSLPRLEEQIEAKLSETHAELERYGTGPPEDSAERIYFLIDKVTAFTQDAINLSTGEELKSGVRLNVFSTLRQEFGKWKLHLDRSGENFNQRIEGEVSNYEKTYRGRELPGFINYKTFEVMVKDQIKQLEEPAVKKLKEISDAVRKVFLLLAQSSFTGFPNLLKSAKTKIEAIKQVNESTAESMLRTQFKMEMIVYTQDSTYSHSLSERKREEEDDRPLPTPKIRSTIFSTDNHATLQEMMLHLKSYYRISSQRLADQIPMVIRYLVLQEFASQLQREMLQTLQEKDNIEQLLKEDFDIGSKRAALQNKLKRLMKARSYLVEF.

The region spanning 31 to 304 is the Dynamin-type G domain; the sequence is DLALPAIAVI…LVHHIEKSLP (274 aa). The segment at 41–48 is G1 motif; sequence GDQSSGKS. 41–48 serves as a coordination point for GTP; that stretch reads GDQSSGKS. Residues 66–68 are G2 motif; that stretch reads VTR. The interval 142-145 is G3 motif; that stretch reads DLPG. GTP-binding positions include 142–146 and 211–214; these read DLPGI and TKPD. Residues 211–214 form a G4 motif region; the sequence is TKPD. A G5 motif region spans residues 243–246; it reads KCRG. The 87-residue stretch at 537–623 folds into the GED domain; the sequence is LQEMMLHLKS…MKARSYLVEF (87 aa).

This sequence belongs to the TRAFAC class dynamin-like GTPase superfamily. Dynamin/Fzo/YdjA family.

It localises to the cytoplasm. Functionally, does not inhibit strain RB-1 of the fish pathogen, infectious hematopoietic necrosis virus (IHNV). The sequence is that of Interferon-induced GTP-binding protein Mx3 from Oncorhynchus mykiss (Rainbow trout).